A 322-amino-acid chain; its full sequence is Ribosomal RNA small subunit methyltransferase H (322 aa).

Residues 42-44 (GGH), D62, F86, D107, and Q114 each bind S-adenosyl-L-methionine.

Belongs to the methyltransferase superfamily. RsmH family.

Its subcellular location is the cytoplasm. It carries out the reaction cytidine(1402) in 16S rRNA + S-adenosyl-L-methionine = N(4)-methylcytidine(1402) in 16S rRNA + S-adenosyl-L-homocysteine + H(+). Functionally, specifically methylates the N4 position of cytidine in position 1402 (C1402) of 16S rRNA. This is Ribosomal RNA small subunit methyltransferase H from Janthinobacterium sp. (strain Marseille) (Minibacterium massiliensis).